The sequence spans 302 residues: MQVLRTPESRFAGLADWPFAPHYAEITDAGGARLRLHYVDEGPRDGAPVLLMHGEPSWAYLYRKIIPALAARGHRVIAPDLIGFGRSDKPAARGDYTYERHVAWMSAWLEGLDLRGLTLFCQDWGGLIGLRLVAAFPERFAGLVIANTGLPTGAGMTDGFKAWLDFSQNVPEMPIGLIVNMGTGRDLTPAEIAAYDAPFPDETYKEGARQFPMLVPVTPEHASVAENLAAWKVLEHFPGPVVTAFSDGDPVTRGGEAIFQSRMPGALGQPHRTLRGGHFLQEDCPDDIVDIVDAVARPESQS.

Positions 48–150 (PVLLMHGEPS…AGLVIANTGL (103 aa)) constitute an AB hydrolase-1 domain. D123 (nucleophile) is an active-site residue. The active-site Proton donor is D249. H278 acts as the Proton acceptor in catalysis.

Belongs to the haloalkane dehalogenase family. Type 1 subfamily. Monomer.

The catalysed reaction is 1-haloalkane + H2O = a halide anion + a primary alcohol + H(+). Catalyzes hydrolytic cleavage of carbon-halogen bonds in halogenated aliphatic compounds, leading to the formation of the corresponding primary alcohols, halide ions and protons. The polypeptide is Haloalkane dehalogenase (Caulobacter sp. (strain K31)).